The sequence spans 339 residues: Putative phosphate acyltransferase (339 aa).

Belongs to the PlsX family. In terms of assembly, homodimer. Probably interacts with PlsY.

It localises to the cytoplasm. The catalysed reaction is a fatty acyl-[ACP] + phosphate = an acyl phosphate + holo-[ACP]. Its pathway is lipid metabolism; phospholipid metabolism. In terms of biological role, catalyzes the reversible formation of acyl-phosphate (acyl-PO(4)) from acyl-[acyl-carrier-protein] (acyl-ACP). This enzyme utilizes acyl-ACP as fatty acyl donor, but not acyl-CoA. The chain is Putative phosphate acyltransferase from Clostridium perfringens (strain 13 / Type A).